Here is a 387-residue protein sequence, read N- to C-terminus: 3-ketoacyl-CoA thiolase (387 aa).

The Acyl-thioester intermediate role is filled by Cys-91. Active-site proton acceptor residues include His-343 and Cys-373.

This sequence belongs to the thiolase-like superfamily. Thiolase family. Heterotetramer of two alpha chains (FadB) and two beta chains (FadA).

It localises to the cytoplasm. The enzyme catalyses an acyl-CoA + acetyl-CoA = a 3-oxoacyl-CoA + CoA. It participates in lipid metabolism; fatty acid beta-oxidation. In terms of biological role, catalyzes the final step of fatty acid oxidation in which acetyl-CoA is released and the CoA ester of a fatty acid two carbons shorter is formed. This is 3-ketoacyl-CoA thiolase from Vibrio cholerae serotype O1 (strain ATCC 39315 / El Tor Inaba N16961).